Here is a 388-residue protein sequence, read N- to C-terminus: Leucine aminopeptidase 1 (388 aa).

An N-terminal signal peptide occupies residues 1 to 19; it reads MRSSVLFSLYAATLVAAVA. A propeptide spanning residues 20-88 is cleaved from the precursor; it reads HPKDPQIVLQ…TLNHKLSTES (69 aa). Asn-98 carries an N-linked (GlcNAc...) asparagine glycan. His-187, Asp-206, Glu-245, and Asp-272 together coordinate Zn(2+). Cys-321 and Cys-325 are disulfide-bonded. His-354 is a binding site for Zn(2+).

The protein belongs to the peptidase M28 family. M28E subfamily. Monomer. Zn(2+) is required as a cofactor.

Its subcellular location is the secreted. In terms of biological role, extracellular aminopeptidase that allows assimilation of proteinaceous substrates. This chain is Leucine aminopeptidase 1 (LAP1), found in Leptosphaeria maculans (strain JN3 / isolate v23.1.3 / race Av1-4-5-6-7-8) (Blackleg fungus).